The chain runs to 538 residues: Solute carrier family 2, facilitated glucose transporter member 9 (538 aa).

The Cytoplasmic segment spans residues M1–S34. S3 is modified (phosphoserine). A helical transmembrane segment spans residues F35–Y54. 2 N-linked (GlcNAc...) asparagine glycosylation sites follow: N55 and N71. Residues N55–T88 lie on the Extracellular side of the membrane. A helical transmembrane segment spans residues L89 to V109. Over K110–S120 the chain is Cytoplasmic. A helical membrane pass occupies residues T121 to G143. Residues T144 to L148 are Extracellular-facing. A helical transmembrane segment spans residues I149–L170. Residues N171–S181 are Cytoplasmic-facing. The chain crosses the membrane as a helical span at residues L182–L200. At G201–T211 the chain is on the extracellular side. A helical membrane pass occupies residues W212–L233. At P234–Q297 the chain is on the cytoplasmic side. The chain crosses the membrane as a helical span at residues V298 to Y319. At T320 to K333 the chain is on the extracellular side. A helical transmembrane segment spans residues I334–I356. The Cytoplasmic portion of the chain corresponds to E357–R362. Residues P363–L385 traverse the membrane as a helical segment. Over Q386–P390 the chain is Extracellular. Residues W391 to L418 form a helical membrane-spanning segment. Residues T419–P429 lie on the Cytoplasmic side of the membrane. A helical membrane pass occupies residues A430–I453. Over Q454–D458 the chain is Extracellular. The chain crosses the membrane as a helical span at residues S459–L480. At P481–V538 the chain is on the cytoplasmic side. Residues F495–V538 are disordered. Polar residues predominate over residues N518–V538.

It belongs to the major facilitator superfamily. Sugar transporter (TC 2.A.1.1) family. Post-translationally, N-glycosylated. In terms of tissue distribution, highly expressed in the intestine, with high expression in the jejunum and ileum, the segments of the intestine that perform the majority of urate excretion. Isoform 1: Widely expressed. Isoform 1: In kidney, expressed at low levels in proximal tubules. Isoform 2: Primarily expressed in liver and kidney; with specific expression in distal convoluted and connecting tubules of kidney.

The protein resides in the basolateral cell membrane. The protein localises to the apical cell membrane. It catalyses the reaction urate(out) = urate(in). In terms of biological role, high-capacity urate transporter, which may play a role in the urate reabsorption by proximal tubules. May have a residual high-affinity, low-capacity glucose and fructose transporter activity. Transports urate at rates 45- to 60-fold faster than glucose. Does not transport galactose. May mediate small uptake of adenine but not of other nucleobases. The sequence is that of Solute carrier family 2, facilitated glucose transporter member 9 from Mus musculus (Mouse).